A 693-amino-acid polypeptide reads, in one-letter code: Protein-glutamine gamma-glutamyltransferase E (693 aa).

Phosphotyrosine is present on Y111. Position 112 is a phosphothreonine (T112). Ca(2+) contacts are provided by A222, N225, N227, D228, and N230. C273 is a catalytic residue. Residues D302, D304, N306, S308, and D325 each contribute to the Ca(2+) site. Residues H331 and D354 contribute to the active site. Positions 394, 416, 444, and 449 each coordinate Ca(2+). The segment at 457 to 483 is disordered; that stretch reads LDKLKPNASFGATSSRNPEGEDKEPSI.

Belongs to the transglutaminase superfamily. Transglutaminase family. In terms of assembly, consists of two polypeptide chains, which are synthesized as a precursor form of a single polypeptide. It depends on Ca(2+) as a cofactor. Post-translationally, activated by proteolytic processing. In vitro activation is commonly achieved by cleavage with dispase, a neutral bacterial protease. Physiological activation may be catalyzed by CTSL and, to a lesser extent, by CTSS. In terms of tissue distribution, expressed in skin and stomach and, at lower levels, in testis, kidney and spleen (at protein level). On the basis of its catalytic activity, detected in the epidermis, around the granular and spinous layers but not in the outermost cornified layers. In hair follicles, mainly located in the medulla and the hair cortex.

Its subcellular location is the cytoplasm. The catalysed reaction is L-glutaminyl-[protein] + L-lysyl-[protein] = [protein]-L-lysyl-N(6)-5-L-glutamyl-[protein] + NH4(+). Catalyzes the calcium-dependent formation of isopeptide cross-links between glutamine and lysine residues in various proteins, as well as the conjugation of polyamines to proteins. Involved in the formation of the cornified envelope (CE), a specialized component consisting of covalent cross-links of proteins beneath the plasma membrane of terminally differentiated keratinocytes. Catalyzes small proline-rich proteins (SPRR1 and SPRR2) and LOR cross-linking to form small interchain oligomers, which are further cross-linked by TGM1 onto the growing CE scaffold. In hair follicles, involved in cross-linking structural proteins to hardening the inner root sheath. The sequence is that of Protein-glutamine gamma-glutamyltransferase E (Tgm3) from Mus musculus (Mouse).